The sequence spans 353 residues: Photosystem II D2 protein (353 aa).

A helical membrane pass occupies residues 41-61; sequence TAYLALGGWLTGTTFVTSWYT. His118 is a chlorophyll a binding site. A helical transmembrane segment spans residues 125–141; the sequence is GFMLRQFEISRLVGIRP. Pheophytin a contacts are provided by Gln130 and Asn143. The chain crosses the membrane as a helical span at residues 153–166; the sequence is VFVSVFLMYPLGQS. His198 contacts chlorophyll a. The helical transmembrane segment at 208-228 threads the bilayer; sequence GALLCAIHGATVENTLYEDGE. Positions 215 and 262 each coordinate a plastoquinone. His215 lines the Fe cation pocket. A Fe cation-binding site is contributed by His269. Residues 279–295 traverse the membrane as a helical segment; that stretch reads GLWTSSIGIIGLALNLR.

It belongs to the reaction center PufL/M/PsbA/D family. PSII is composed of 1 copy each of membrane proteins PsbA, PsbB, PsbC, PsbD, PsbE, PsbF, PsbH, PsbI, PsbJ, PsbK, PsbL, PsbM, PsbT, PsbX, PsbY, PsbZ, Psb30/Ycf12, peripheral proteins PsbO, CyanoQ (PsbQ), PsbU, PsbV and a large number of cofactors. It forms dimeric complexes. The cofactor is The D1/D2 heterodimer binds P680, chlorophylls that are the primary electron donor of PSII, and subsequent electron acceptors. It shares a non-heme iron and each subunit binds pheophytin, quinone, additional chlorophylls, carotenoids and lipids. There is also a Cl(-1) ion associated with D1 and D2, which is required for oxygen evolution. The PSII complex binds additional chlorophylls, carotenoids and specific lipids..

The protein localises to the host cellular thylakoid membrane. The enzyme catalyses 2 a plastoquinone + 4 hnu + 2 H2O = 2 a plastoquinol + O2. In terms of biological role, photosystem II (PSII) is a light-driven water:plastoquinone oxidoreductase that uses light energy to abstract electrons from H(2)O, generating O(2) and a proton gradient subsequently used for ATP formation. It consists of a core antenna complex that captures photons, and an electron transfer chain that converts photonic excitation into a charge separation. The D1/D2 (PsbA/PsbD) reaction center heterodimer binds P680, the primary electron donor of PSII as well as several subsequent electron acceptors. D2 is needed for assembly of a stable PSII complex. The sequence is that of Photosystem II D2 protein (psbD) from Synechococcus phage S-PM2.